We begin with the raw amino-acid sequence, 245 residues long: tRNA (guanine-N(7)-)-methyltransferase (245 aa).

Residues Glu71, Glu96, Asp123, and Asp146 each coordinate S-adenosyl-L-methionine. Asp146 is an active-site residue. Lys150 is a substrate binding site. Residues 152–157 (KHNKRR) are interaction with RNA. Residues Asp182 and 224–227 (TKFE) contribute to the substrate site.

Belongs to the class I-like SAM-binding methyltransferase superfamily. TrmB family.

It carries out the reaction guanosine(46) in tRNA + S-adenosyl-L-methionine = N(7)-methylguanosine(46) in tRNA + S-adenosyl-L-homocysteine. The protein operates within tRNA modification; N(7)-methylguanine-tRNA biosynthesis. Its function is as follows. Catalyzes the formation of N(7)-methylguanine at position 46 (m7G46) in tRNA. This Albidiferax ferrireducens (strain ATCC BAA-621 / DSM 15236 / T118) (Rhodoferax ferrireducens) protein is tRNA (guanine-N(7)-)-methyltransferase.